The primary structure comprises 298 residues: Probable 2-(5''-triphosphoribosyl)-3'-dephosphocoenzyme-A synthase (298 aa).

Belongs to the CitG/MdcB family.

It carries out the reaction 3'-dephospho-CoA + ATP = 2'-(5''-triphospho-alpha-D-ribosyl)-3'-dephospho-CoA + adenine. The polypeptide is Probable 2-(5''-triphosphoribosyl)-3'-dephosphocoenzyme-A synthase (Salmonella arizonae (strain ATCC BAA-731 / CDC346-86 / RSK2980)).